The primary structure comprises 84 residues: Small ribosomal subunit protein uS17 (84 aa).

This sequence belongs to the universal ribosomal protein uS17 family. As to quaternary structure, part of the 30S ribosomal subunit.

In terms of biological role, one of the primary rRNA binding proteins, it binds specifically to the 5'-end of 16S ribosomal RNA. The sequence is that of Small ribosomal subunit protein uS17 from Blochmanniella pennsylvanica (strain BPEN).